Consider the following 117-residue polypeptide: Large ribosomal subunit protein bL20 (117 aa).

This sequence belongs to the bacterial ribosomal protein bL20 family.

Functionally, binds directly to 23S ribosomal RNA and is necessary for the in vitro assembly process of the 50S ribosomal subunit. It is not involved in the protein synthesizing functions of that subunit. The chain is Large ribosomal subunit protein bL20 from Aliivibrio salmonicida (strain LFI1238) (Vibrio salmonicida (strain LFI1238)).